The sequence spans 393 residues: Arginine biosynthesis bifunctional protein ArgJ 3 (393 aa).

6 residues coordinate substrate: T148, K170, T181, E260, N388, and T393. T181 (nucleophile) is an active-site residue.

Belongs to the ArgJ family. In terms of assembly, heterotetramer of two alpha and two beta chains.

It localises to the cytoplasm. The catalysed reaction is N(2)-acetyl-L-ornithine + L-glutamate = N-acetyl-L-glutamate + L-ornithine. It catalyses the reaction L-glutamate + acetyl-CoA = N-acetyl-L-glutamate + CoA + H(+). Its pathway is amino-acid biosynthesis; L-arginine biosynthesis; L-ornithine and N-acetyl-L-glutamate from L-glutamate and N(2)-acetyl-L-ornithine (cyclic): step 1/1. It functions in the pathway amino-acid biosynthesis; L-arginine biosynthesis; N(2)-acetyl-L-ornithine from L-glutamate: step 1/4. In terms of biological role, catalyzes two activities which are involved in the cyclic version of arginine biosynthesis: the synthesis of N-acetylglutamate from glutamate and acetyl-CoA as the acetyl donor, and of ornithine by transacetylation between N(2)-acetylornithine and glutamate. The protein is Arginine biosynthesis bifunctional protein ArgJ 3 of Streptomyces clavuligerus.